Consider the following 123-residue polypeptide: Gamma-synuclein (123 aa).

Repeat copies occupy residues 20–30 and 31–41. Residues 20 to 67 form a 4 X 11 AA tandem repeats of [EGSA]-K-T-K-[EQ]-[GQ]-V-X(4) region; sequence EKTKQGVTEAAEKTKEGVMYVGTKTKENVVQSVTSVAEKTKEQANAVS. Residues 42-56 form a 3; approximate repeat; that stretch reads TKTKENVVQSVTSVA. Copy 4 of the repeat occupies 57 to 67; the sequence is EKTKEQANAVS. Phosphoserine is present on residues Ser67 and Ser72. A disordered region spans residues 91–123; sequence TTGVVRKEDLEPPAQDQEAKEQEENEEAKSGED. Over residues 107 to 123 the composition is skewed to basic and acidic residues; sequence QEAKEQEENEEAKSGED. The residue at position 120 (Ser120) is a Phosphoserine; by BARK1, CaMK2 and CK2.

Belongs to the synuclein family. In terms of assembly, may be a centrosome-associated protein. Interacts with MYOC; affects its secretion and its aggregation. Post-translationally, phosphorylated. Phosphorylation by GRK5 appears to occur on residues distinct from the residue phosphorylated by other kinases. As to expression, highly expressed in brain, particularly in the substantia nigra. Also expressed in the corpus callosum, heart, skeletal muscle, ovary, testis, colon and spleen. Weak expression in pancreas, kidney and lung. Expressed predominantly in the cell bodies and axons of primary sensory neurons, sympathetic neurons and motoneurons.

The protein localises to the cytoplasm. Its subcellular location is the perinuclear region. The protein resides in the cytoskeleton. It is found in the microtubule organizing center. It localises to the centrosome. The protein localises to the spindle. Plays a role in neurofilament network integrity. May be involved in modulating axonal architecture during development and in the adult. In vitro, increases the susceptibility of neurofilament-H to calcium-dependent proteases. May also function in modulating the keratin network in skin. Activates the MAPK and Elk-1 signal transduction pathway. This chain is Gamma-synuclein (Sncg), found in Mus musculus (Mouse).